The following is a 388-amino-acid chain: WD repeat-containing protein 55 (388 aa).

Residues 1–20 (MDPTCEESPAEDSNNEEEDL) show a composition bias toward acidic residues. A disordered region spans residues 1 to 33 (MDPTCEESPAEDSNNEEEDLDSTKAAPRIRDTP). 7 WD repeats span residues 37 to 76 (VLEAPASGLAFHPTRDLLAAGDVDGDVFVFAYSCQEGETK), 83 to 122 (HHLKSCRAVVFSEDGQKLVTVSKDKAIHILDVEQGQLERR), 126 to 164 (AHSAPINSVLLVDENALVTGDDTGGIRLWDQRKEGPLMD), 167 to 206 (QHEEYIADMALDPAKKLLLTASGDGCLGVFNIKRRRFELL), 209 to 248 (PQSGDLTSVALMKYGKKVACGSSEGTIYLFNWNGFGATSD), 251 to 290 (ALRAESIDCIVPVTENLLCTGSTDGIIRAVNILPNRVVGT), and 293 to 333 (QHAG…TVVV). Position 355 is a phosphoserine (S355). Residues 364 to 388 (REDEEDAKAPEEVVRESDDDDDDSD) are disordered. Residues 370 to 379 (AKAPEEVVRE) show a composition bias toward basic and acidic residues.

It belongs to the WD repeat WDR55 family.

Its subcellular location is the nucleus. It localises to the nucleolus. The protein localises to the cytoplasm. Its function is as follows. Nucleolar protein that acts as a modulator of rRNA synthesis. Plays a central role during organogenesis. The chain is WD repeat-containing protein 55 (Wdr55) from Mus musculus (Mouse).